Consider the following 389-residue polypeptide: Putative glutamate--cysteine ligase 2 (389 aa).

It belongs to the glutamate--cysteine ligase type 2 family. YbdK subfamily.

It carries out the reaction L-cysteine + L-glutamate + ATP = gamma-L-glutamyl-L-cysteine + ADP + phosphate + H(+). Its function is as follows. ATP-dependent carboxylate-amine ligase which exhibits weak glutamate--cysteine ligase activity. The sequence is that of Putative glutamate--cysteine ligase 2 from Rhodospirillum rubrum (strain ATCC 11170 / ATH 1.1.1 / DSM 467 / LMG 4362 / NCIMB 8255 / S1).